The primary structure comprises 249 residues: Chitooligosaccharide deacetylase (249 aa).

Mg(2+)-binding residues include His61 and His125.

This sequence belongs to the YdjC deacetylase family. ChbG subfamily. As to quaternary structure, homodimer. The cofactor is Mg(2+).

It localises to the cytoplasm. It carries out the reaction N,N'-diacetylchitobiose + H2O = N-acetyl-beta-D-glucosaminyl-(1-&gt;4)-D-glucosamine + acetate. It catalyses the reaction diacetylchitobiose-6'-phosphate + H2O = N'-monoacetylchitobiose-6'-phosphate + acetate. It participates in glycan degradation; chitin degradation. Functionally, involved in the degradation of chitin. ChbG is essential for growth on the acetylated chitooligosaccharides chitobiose and chitotriose but is dispensable for growth on cellobiose and chitosan dimer, the deacetylated form of chitobiose. Deacetylation of chitobiose-6-P and chitotriose-6-P is necessary for both the activation of the chb promoter by the regulatory protein ChbR and the hydrolysis of phosphorylated beta-glucosides by the phospho-beta-glucosidase ChbF. Catalyzes the removal of only one acetyl group from chitobiose-6-P to yield monoacetylchitobiose-6-P, the inducer of ChbR and the substrate of ChbF. The chain is Chitooligosaccharide deacetylase from Escherichia coli (strain K12 / MC4100 / BW2952).